Reading from the N-terminus, the 838-residue chain is DNA gyrase subunit A (838 aa).

In terms of domain architecture, Topo IIA-type catalytic spans 41 to 510 (LPEVRDGLKP…ADGDVSDEDL (470 aa)). The active-site O-(5'-phospho-DNA)-tyrosine intermediate is the tyrosine 129. The short motif at 537-543 (QKRGGKG) is the GyrA-box element.

Belongs to the type II topoisomerase GyrA/ParC subunit family. As to quaternary structure, heterotetramer, composed of two GyrA and two GyrB chains. In the heterotetramer, GyrA contains the active site tyrosine that forms a transient covalent intermediate with DNA, while GyrB binds cofactors and catalyzes ATP hydrolysis. Mg(2+) serves as cofactor.

It is found in the cytoplasm. It carries out the reaction ATP-dependent breakage, passage and rejoining of double-stranded DNA.. With respect to regulation, DNA supercoiling is inhibited by EDTA, novobiocin, coumermycin and ciprofloxacin. Its function is as follows. A type II topoisomerase that negatively supercoils closed circular double-stranded (ds) DNA in an ATP-dependent manner to modulate DNA topology and maintain chromosomes in an underwound state. Also catalyzes the interconversion of other topological isomers of double-stranded DNA rings, including catenanes and knotted rings. Relaxes negatively supercoiled DNA in an ATP-independent manner. A linear reaction intermediate can be trapped in the presence of the antibiotic ciprofloxacin. Negative supercoiling favors strand separation, and DNA replication, transcription, recombination and repair, all of which involve strand separation. Type II topoisomerases break and join 2 DNA strands simultaneously in an ATP-dependent manner. This chain is DNA gyrase subunit A, found in Mycobacterium bovis (strain BCG / Pasteur 1173P2).